Consider the following 102-residue polypeptide: Small ribosomal subunit protein uS10 (102 aa).

This sequence belongs to the universal ribosomal protein uS10 family. In terms of assembly, part of the 30S ribosomal subunit.

Functionally, involved in the binding of tRNA to the ribosomes. In Brucella abortus (strain S19), this protein is Small ribosomal subunit protein uS10.